The primary structure comprises 258 residues: Global transcriptional regulator CodY (258 aa).

The tract at residues 1-156 (MSSLLSKTRR…SATIVGMEML (156 aa)) is GAF domain. A DNA-binding region (H-T-H motif) is located at residues 204–223 (ASKIADKVGITRSVIVNALR).

Belongs to the CodY family.

The protein resides in the cytoplasm. DNA-binding global transcriptional regulator which is involved in the adaptive response to starvation and acts by directly or indirectly controlling the expression of numerous genes in response to nutrient availability. During rapid exponential growth, CodY is highly active and represses genes whose products allow adaptation to nutrient depletion. This Clostridium botulinum (strain Eklund 17B / Type B) protein is Global transcriptional regulator CodY.